Here is a 123-residue protein sequence, read N- to C-terminus: S-adenosylmethionine decarboxylase proenzyme 2 (123 aa).

Serine 65 acts as the Schiff-base intermediate with substrate; via pyruvic acid in catalysis. Position 65 is a pyruvic acid (Ser); by autocatalysis (serine 65). The Proton acceptor; for processing activity role is filled by histidine 70. Residue cysteine 85 is the Proton donor; for catalytic activity of the active site.

Belongs to the prokaryotic AdoMetDC family. Type 1 subfamily. In terms of assembly, heterotetramer of two alpha and two beta chains arranged as a dimer of alpha/beta heterodimers. The cofactor is pyruvate. In terms of processing, is synthesized initially as an inactive proenzyme. Formation of the active enzyme involves a self-maturation process in which the active site pyruvoyl group is generated from an internal serine residue via an autocatalytic post-translational modification. Two non-identical subunits are generated from the proenzyme in this reaction, and the pyruvate is formed at the N-terminus of the alpha chain, which is derived from the carboxyl end of the proenzyme. The post-translation cleavage follows an unusual pathway, termed non-hydrolytic serinolysis, in which the side chain hydroxyl group of the serine supplies its oxygen atom to form the C-terminus of the beta chain, while the remainder of the serine residue undergoes an oxidative deamination to produce ammonia and the pyruvoyl group blocking the N-terminus of the alpha chain.

The catalysed reaction is S-adenosyl-L-methionine + H(+) = S-adenosyl 3-(methylsulfanyl)propylamine + CO2. It functions in the pathway amine and polyamine biosynthesis; S-adenosylmethioninamine biosynthesis; S-adenosylmethioninamine from S-adenosyl-L-methionine: step 1/1. In terms of biological role, catalyzes the decarboxylation of S-adenosylmethionine to S-adenosylmethioninamine (dcAdoMet), the propylamine donor required for the synthesis of the polyamines spermine and spermidine from the diamine putrescine. In Bacillus cereus (strain ATCC 14579 / DSM 31 / CCUG 7414 / JCM 2152 / NBRC 15305 / NCIMB 9373 / NCTC 2599 / NRRL B-3711), this protein is S-adenosylmethionine decarboxylase proenzyme 2.